The chain runs to 476 residues: MRTMSLNIGTIHFVGIGGIGMSGIAEILHNLGYSVQGTDIADNYNVERLRKMGIRVHIGHAAEALGDARVVVVSSAVKADNPEVQAARAKLVPVVRRAEMLAELMRLKSAIAIGGTHGKTTTTSLIAALLDTARLDPTVINGGIINAYGTNARLGASEWMVVEADESDGSFIKLPSTAVVVTNIDPEHMDHYGTVERLHEAFRTFVENIPFYGFAAMCIDHPEVQALVARVPDRKLVTYGFNHQALVRVEKLSMDITGARYDVVITDRVTGATRTIADIHLPMYGEHNVLNSLAAIAVANELGLPNDVVKTALGGFKGVKRRFTRTGEAKGVTVIDDYGHHPVEIAAVLKAARSACQGNVIAVVQPHRYSRLSSLFAEFCTCFNDADMVIVADVYAAGEKPMEGFDKAALVKGLQEHGHRRVMALADSKALAPLVNSLAGPGDMVVCLGAGNITSWAHALPADLAALPDPSPGGAE.

115 to 121 (GTHGKTT) provides a ligand contact to ATP.

Belongs to the MurCDEF family.

It is found in the cytoplasm. It carries out the reaction UDP-N-acetyl-alpha-D-muramate + L-alanine + ATP = UDP-N-acetyl-alpha-D-muramoyl-L-alanine + ADP + phosphate + H(+). Its pathway is cell wall biogenesis; peptidoglycan biosynthesis. In terms of biological role, cell wall formation. This chain is UDP-N-acetylmuramate--L-alanine ligase, found in Paramagnetospirillum magneticum (strain ATCC 700264 / AMB-1) (Magnetospirillum magneticum).